A 258-amino-acid chain; its full sequence is Axonemal dynein light intermediate polypeptide 1 (258 aa).

2 disordered regions span residues 1-60 (MIPP…CVPD) and 202-231 (DLER…EEKK). Residues 176-255 (MRKALQAEQG…LKAQLEGIIA (80 aa)) adopt a coiled-coil conformation.

Belongs to the inner dynein arm light chain family. Interacts with CFAP45. Interacts with DYNC1H1.

It localises to the cell projection. It is found in the cilium. The protein resides in the flagellum. Its subcellular location is the dynein axonemal particle. The protein localises to the cytoplasm. Its function is as follows. Involved in sperm flagellum assembly. In Rattus norvegicus (Rat), this protein is Axonemal dynein light intermediate polypeptide 1.